A 784-amino-acid polypeptide reads, in one-letter code: ATP-dependent 6-phosphofructokinase, platelet type (784 aa).

The residue at position 1 (methionine 1) is an N-acetylmethionine. The segment at 1–399 is N-terminal catalytic PFK domain 1; the sequence is MDADDSRAPK…NLNTYKRLAI (399 aa). Phosphoserine is present on residues serine 6, serine 12, and serine 21. Residues glycine 34, 97–98, and 127–130 contribute to the ATP site; these read RC and GDGS. Aspartate 128 lines the Mg(2+) pocket. Serine 142 carries the phosphoserine modification. Substrate contacts are provided by residues 173 to 175, arginine 210, 217 to 219, glutamate 273, arginine 301, and 307 to 310; these read SID, MGR, and HVQR. Residue aspartate 175 is the Proton acceptor of the active site. At serine 386 the chain carries Phosphoserine. Lysine 395 carries the post-translational modification N6-acetyllysine. Residues 400–411 are interdomain linker; the sequence is KLPDDQIPKTNC. The C-terminal regulatory PFK domain 2 stretch occupies residues 412 to 784; it reads NVAVINVGAP…QLEHVQPWSV (373 aa). Arginine 481 lines the beta-D-fructose 2,6-bisphosphate pocket. Lysine 486 bears the N6-acetyllysine mark. Beta-D-fructose 2,6-bisphosphate contacts are provided by residues 538–542, arginine 576, 583–585, and glutamate 639; these read TVSNN and MGG. Serine 540 carries an O-linked (GlcNAc) serine glycan. At tyrosine 651 the chain carries Phosphotyrosine. Beta-D-fructose 2,6-bisphosphate contacts are provided by residues arginine 665 and 671-674; that span reads HMQQ. An N6-acetyllysine modification is found at lysine 688. Arginine 744 is a beta-D-fructose 2,6-bisphosphate binding site. Serine 783 is modified (phosphoserine).

This sequence belongs to the phosphofructokinase type A (PFKA) family. ATP-dependent PFK group I subfamily. Eukaryotic two domain clade 'E' sub-subfamily. In terms of assembly, homo- and heterotetramers. Phosphofructokinase (PFK) enzyme functions as a tetramer composed of different combinations of 3 types of subunits, called PFKM (where M stands for Muscle), PFKL (Liver) and PFKP (Platelet). The composition of the PFK tetramer differs according to the tissue type it is present in. In muscles, it is composed of 4 PFKM subunits (also called M4). In the liver, the predominant form is a tetramer of PFKL subunits (L4). In erythrocytes, both PFKM and PFKL subunits randomly tetramerize to form M4, L4 and other combinations (ML3, M2L2, M3L). In platelets, brain and fibroblasts, PFK contains a higher proportion of PFKP subunits. The kinetic and regulatory properties of the tetrameric enzyme are dependent on the subunit composition, hence can vary across tissues. Interacts with ATG4B; promoting phosphorylation of ATG4B. Requires Mg(2+) as cofactor. Phosphorylation at Ser-386 promotes interaction with ATG4B. Post-translationally, glcNAcylation decreases enzyme activity.

It is found in the cytoplasm. The enzyme catalyses beta-D-fructose 6-phosphate + ATP = beta-D-fructose 1,6-bisphosphate + ADP + H(+). It participates in carbohydrate degradation; glycolysis; D-glyceraldehyde 3-phosphate and glycerone phosphate from D-glucose: step 3/4. With respect to regulation, allosterically activated by ADP, AMP, or fructose 2,6-bisphosphate, and allosterically inhibited by ATP or citrate. Its function is as follows. Catalyzes the phosphorylation of D-fructose 6-phosphate to fructose 1,6-bisphosphate by ATP, the first committing step of glycolysis. This Homo sapiens (Human) protein is ATP-dependent 6-phosphofructokinase, platelet type (PFKP).